Consider the following 730-residue polypeptide: Elongation factor 2 (730 aa).

The region spanning 19-228 (QRIRNIGIVA…TGVSFKDVYD (210 aa)) is the tr-type G domain. GTP is bound by residues 28–35 (AHIDHGKT), 94–98 (DTPGH), and 148–151 (NKVD). His596 carries the diphthamide modification.

This sequence belongs to the TRAFAC class translation factor GTPase superfamily. Classic translation factor GTPase family. EF-G/EF-2 subfamily.

It is found in the cytoplasm. Its function is as follows. Catalyzes the GTP-dependent ribosomal translocation step during translation elongation. During this step, the ribosome changes from the pre-translocational (PRE) to the post-translocational (POST) state as the newly formed A-site-bound peptidyl-tRNA and P-site-bound deacylated tRNA move to the P and E sites, respectively. Catalyzes the coordinated movement of the two tRNA molecules, the mRNA and conformational changes in the ribosome. The chain is Elongation factor 2 from Methanosarcina acetivorans (strain ATCC 35395 / DSM 2834 / JCM 12185 / C2A).